The chain runs to 310 residues: Ribosomal protein uL3 glutamine methyltransferase (310 aa).

This sequence belongs to the protein N5-glutamine methyltransferase family. PrmB subfamily.

It carries out the reaction L-glutaminyl-[ribosomal protein uL3] + S-adenosyl-L-methionine = N(5)-methyl-L-glutaminyl-[ribosomal protein uL3] + S-adenosyl-L-homocysteine + H(+). In terms of biological role, specifically methylates large ribosomal subunit protein uL3 on 'Gln-150'. This chain is Ribosomal protein uL3 glutamine methyltransferase, found in Salmonella typhi.